The chain runs to 229 residues: Wtf element wtf14 (229 aa).

A compositionally biased stretch (basic and acidic residues) spans methionine 1–threonine 26. The disordered stretch occupies residues methionine 1–glutamine 27. 4 consecutive transmembrane segments (helical) span residues isoleucine 71–phenylalanine 91, valine 100–threonine 120, leucine 151–phenylalanine 171, and valine 188–phenylalanine 208.

The protein belongs to the WTF family.

Its subcellular location is the endoplasmic reticulum membrane. In terms of biological role, may act in meiotic drive. The polypeptide is Wtf element wtf14 (Schizosaccharomyces kambucha (Fission yeast)).